A 297-amino-acid chain; its full sequence is Calponin-1 (297 aa).

The Calponin-homology (CH) domain maps to 28 to 131; that stretch reads HQREQELREW…STLLALASMA (104 aa). 3 Calponin-like repeats span residues 164–189, 204–229, and 243–268; these read IGLQMGTNKFASQQGMTAYGTRRHLY, ISLQMGTNKGASQAGMTAPGTKRQIF, and VSLQMGSNKGASQRGMTVYGLPRQVY. Phosphothreonine; by ROCK2 is present on Thr170. Ser175 is modified (phosphoserine; by ROCK2). A phosphothreonine; by ROCK2 mark is found at Thr180 and Thr184. Thr259 is subject to Phosphothreonine; by ROCK2.

It belongs to the calponin family. In terms of assembly, part of cGMP kinase signaling complex at least composed of ACTA2/alpha-actin, CNN1/calponin H1, PLN/phospholamban, PRKG1 and ITPR1. Smooth muscle, and tissues containing significant amounts of smooth muscle.

Functionally, thin filament-associated protein that is implicated in the regulation and modulation of smooth muscle contraction. It is capable of binding to actin, calmodulin and tropomyosin. The interaction of calponin with actin inhibits the actomyosin Mg-ATPase activity. The polypeptide is Calponin-1 (Cnn1) (Mus musculus (Mouse)).